The following is a 462-amino-acid chain: Solute carrier family 41 member 3 (462 aa).

9 consecutive transmembrane segments (helical) span residues 41-61 (CQVAIPILLSGLGMMTAGLVM), 121-141 (LAVVQVQATVVGLLAAVASLM), 163-183 (VITAFLAALALGILMICIVIG), 194-214 (IATPIAASLGDLITLSILALM), 225-245 (WYLTPLVCIGFLALTPLWIFI), 258-278 (YGWFPIILAMIISSFGGLILS), 351-371 (VLLFLVVPGHLIFFYLICLVE), 380-400 (IFVLLYLMAGMMQVVILLYLA), and 424-444 (GLGDLLGTSLLALCFLLDWLL).

The protein belongs to the SLC41A transporter family.

It is found in the mitochondrion inner membrane. It carries out the reaction Mg(2+)(in) + 2 Na(+)(out) = Mg(2+)(out) + 2 Na(+)(in). Na(+)/Mg(2+) ion exchanger that acts as a predominant Mg(2+) efflux system at the mitochondrial inner membrane. This is Solute carrier family 41 member 3 (Slc41a3) from Rattus norvegicus (Rat).